Consider the following 286-residue polypeptide: Cbb3-type cytochrome c oxidase subunit CcoP (286 aa).

A run of 2 helical transmembrane segments spans residues 11–31 and 62–82; these read FGLIAALVILVLTIYESSSLI and VGWIASFMCTIVWAFWYFFFG. Cytochrome c domains lie at 116 to 195 and 205 to 286; these read ELVD…MAEL and QLID…LSNR. 8 residues coordinate heme c: Cys-129, Cys-132, His-133, Met-174, Cys-219, Cys-222, His-223, and Met-264.

This sequence belongs to the CcoP / FixP family. As to quaternary structure, component of the cbb3-type cytochrome c oxidase at least composed of CcoN, CcoO, CcoQ and CcoP. Heme c is required as a cofactor.

The protein localises to the cell inner membrane. The protein operates within energy metabolism; oxidative phosphorylation. C-type cytochrome. Part of the cbb3-type cytochrome c oxidase complex. CcoP subunit is required for transferring electrons from donor cytochrome c via its heme groups to CcoO subunit. From there, electrons are shuttled to the catalytic binuclear center of CcoN subunit where oxygen reduction takes place. The complex also functions as a proton pump. This is Cbb3-type cytochrome c oxidase subunit CcoP from Helicobacter pylori (strain ATCC 700392 / 26695) (Campylobacter pylori).